The chain runs to 98 residues: MATRFMTDPHAMRDMAGRFEVHAQTVEDEARRMWASAQNISGAGWSGMAEATSLDTMAQMNQAFRNIVNMLHGVRDGLVRDANNYEQQEQASQQILSS.

It belongs to the WXG100 family. CFP-10 subfamily. Strongly interacts with EsxL to form a heterodimeric complex under reducing conditions.

The protein localises to the secreted. This chain is ESAT-6-like protein EsxK, found in Mycobacterium tuberculosis (strain CDC 1551 / Oshkosh).